A 357-amino-acid chain; its full sequence is Peptide chain release factor 1 (357 aa).

Gln-234 carries the N5-methylglutamine modification.

It belongs to the prokaryotic/mitochondrial release factor family. Post-translationally, methylated by PrmC. Methylation increases the termination efficiency of RF1.

The protein localises to the cytoplasm. Peptide chain release factor 1 directs the termination of translation in response to the peptide chain termination codons UAG and UAA. This is Peptide chain release factor 1 from Lactococcus lactis subsp. cremoris (strain MG1363).